Here is a 185-residue protein sequence, read N- to C-terminus: Photosystem I assembly protein Ycf4 (185 aa).

The next 2 membrane-spanning stretches (helical) occupy residues 20 to 40 (GNFF…AVGA) and 57 to 77 (ILFF…LFIS).

It belongs to the Ycf4 family.

It is found in the plastid. The protein resides in the chloroplast thylakoid membrane. Functionally, seems to be required for the assembly of the photosystem I complex. This Oryza nivara (Indian wild rice) protein is Photosystem I assembly protein Ycf4.